We begin with the raw amino-acid sequence, 382 residues long: Trophoblast glycoprotein-like (382 aa).

The N-terminal stretch at 1–26 (MAPRAGQPGLQGLLLVAAALSQPAAP) is a signal peptide. 2 cysteine pairs are disulfide-bonded: Cys27–Cys33 and Cys31–Cys43. The Extracellular segment spans residues 27-307 (CPFQCYCFGG…EAAGPELEAS (281 aa)). 5 LRR repeats span residues 57–80 (PPDARNLTIVGANLTVLRAAAFAG), 93–116 (LPLLSALRLTHNHIEVVEDGAFDG), 117–140 (LPSLAALDLSHNPLRALGGGAFRG), 171–194 (LAELRLLGLAGNALSRLPPAALRL), and 196–217 (RLEQLDVRLNALAGLDPDELRA). Residue Asn62 is glycosylated (N-linked (GlcNAc...) asparagine). 2 cysteine pairs are disulfide-bonded: Cys238–Cys264 and Cys240–Cys285. The helical transmembrane segment at 308-328 (YVFFGLVLALIGLIFLMVLYL) threads the bilayer. The Cytoplasmic portion of the chain corresponds to 329 to 382 (NRRGIQRWMRNLREACRDQMEGYHYRYEQDADPRRAPAPAAPAGSRATSPGSGL). The tract at residues 358 to 382 (DADPRRAPAPAAPAGSRATSPGSGL) is disordered. The segment covering 365-382 (PAPAAPAGSRATSPGSGL) has biased composition (low complexity).

The protein resides in the membrane. This Homo sapiens (Human) protein is Trophoblast glycoprotein-like (TPBGL).